We begin with the raw amino-acid sequence, 418 residues long: Glutamyl-tRNA reductase (418 aa).

Substrate contacts are provided by residues 49-52 (TCNR), Ser-109, 114-116 (EPQ), and Gln-120. The active-site Nucleophile is Cys-50. 189-194 (GAGETI) lines the NADP(+) pocket.

Belongs to the glutamyl-tRNA reductase family. As to quaternary structure, homodimer.

The enzyme catalyses (S)-4-amino-5-oxopentanoate + tRNA(Glu) + NADP(+) = L-glutamyl-tRNA(Glu) + NADPH + H(+). It participates in porphyrin-containing compound metabolism; protoporphyrin-IX biosynthesis; 5-aminolevulinate from L-glutamyl-tRNA(Glu): step 1/2. In terms of biological role, catalyzes the NADPH-dependent reduction of glutamyl-tRNA(Glu) to glutamate 1-semialdehyde (GSA). The chain is Glutamyl-tRNA reductase from Escherichia coli O1:K1 / APEC.